We begin with the raw amino-acid sequence, 70 residues long: Large ribosomal subunit protein uL29 (70 aa).

The protein belongs to the universal ribosomal protein uL29 family.

The protein is Large ribosomal subunit protein uL29 of Gloeobacter violaceus (strain ATCC 29082 / PCC 7421).